The sequence spans 1744 residues: Probable disease resistance protein At4g19520 (1744 aa).

In terms of domain architecture, TIR 1 spans 3–163; that stretch reads DGKEVYISFN…KIVADVRQKL (161 aa). The active site involves glutamate 80. Residues 192 to 411 form the NB-ARC domain; that stretch reads SLGIWGMAGI…VSEKEIFLDI (220 aa). 20 LRR repeats span residues 503–526, 557–581, 583–602, 603–626, 648–669, 670–692, 710–733, 734–754, 755–777, 779–802, 804–823, 824–846, 848–871, 892–915, 917–939, 941–963, 987–1010, 1011–1035, 1037–1059, and 1062–1086; these read YEDV…AFQH, PPEL…GFQY, VELN…TKNL, EVLK…QYSP, LQHL…PKVP, PSIR…NHSS, DHRK…IVIF, ESLE…QGFP, QNLK…LCHH, SKLV…MSNM, YLAV…KELP, RNLK…LLET, SEVV…MSKL, PLNL…IGDL, LLDT…MHNL, PLKV…LPKV, YEHR…IRWM, PSLK…DFSK, LSLR…SLQL, and AHGC…TFSN. Positions 1399 to 1559 constitute a TIR 2 domain; that stretch reads RNNDVFVSFH…KVANDIRKKL (161 aa).

Belongs to the disease resistance TIR-NB-LRR family.

The enzyme catalyses NAD(+) + H2O = ADP-D-ribose + nicotinamide + H(+). In terms of biological role, probable disease resistance protein. The polypeptide is Probable disease resistance protein At4g19520 (Arabidopsis thaliana (Mouse-ear cress)).